The chain runs to 3164 residues: Genome polyprotein (3164 aa).

Residues 219–362 (KMNDQGVDML…RTMSHKIVHF (144 aa)) enclose the Peptidase S30 domain. Residues H270, D279, and S313 each act as for P1 proteinase activity in the active site. An Involved in interaction with stylet and aphid transmission motif is present at residues 414–417 (KITC). The short motif at 672 to 674 (PTK) is the Involved in virions binding and aphid transmission element. One can recognise a Peptidase C6 domain in the interval 698-820 (MYIAKEGYCY…ESSLKHYRVG (123 aa)). Catalysis depends on for helper component proteinase activity residues C706 and H779. The Helicase ATP-binding domain occupies 1300 to 1452 (KIAHESDKDI…TQYPVSISTE (153 aa)). 1313 to 1320 (GAVGSGKS) is a binding site for ATP. The DEAH box signature appears at 1402–1405 (DECH). The Helicase C-terminal domain maps to 1471-1630 (DVISKGDNIL…GLPVITNNVS (160 aa)). The Cytoplasmic segment spans residues 1872–1889 (NTSDMSKFLKLKGKWNKT). A helical transmembrane segment spans residues 1890–1910 (LITRDVLVLCGVLGGGLWMVI). The Lumenal segment spans residues 1911-1924 (QHLRSKMSEPVTHE). Positions 1965-1972 (KKGKSKGR) match the Nuclear localization signal motif. Y1987 carries the post-translational modification O-(5'-phospho-RNA)-tyrosine. The Peptidase C4 domain occupies 2117 to 2335 (SNSMFRGLRD…ISWGSLNIQA (219 aa)). Active-site for nuclear inclusion protein A activity residues include H2162, D2197, and C2267. A RdRp catalytic domain is found at 2601–2725 (WVYCDADGSQ…SVHPEYEYIL (125 aa)). A disordered region spans residues 2884 to 2935 (GLTDEQKQAEKEKKEREKAEKERERQKQLALKKGKDVAQEEGKRDKEVNAGT). The segment covering 2887–2931 (DEQKQAEKEKKEREKAEKERERQKQLALKKGKDVAQEEGKRDKEV) has biased composition (basic and acidic residues). T3147 is subject to Phosphothreonine.

The protein belongs to the potyviridae genome polyprotein family. Interacts with host eIF4E protein (via cap-binding region); this interaction mediates the translation of the VPg-viral RNA conjugates. Part of a complex that comprises VPg, RNA, host EIF4E and EIF4G; this interaction mediates the translation of the VPg-viral RNA conjugates. In terms of assembly, interacts, via N-terminal region, with host Sec24a protein in COPII-coated vesicles. This binding triggers the formation of host endoplasmic reticulum (ER)-derived viral vesicles involved in cell-to-cell viral movement. In terms of processing, VPg is uridylylated by the polymerase and is covalently attached to the 5'-end of the genomic RNA. This uridylylated form acts as a nucleotide-peptide primer for the polymerase. Post-translationally, potyviral RNA is expressed as two polyproteins which undergo post-translational proteolytic processing. Genome polyprotein is processed by NIa-pro, P1 and HC-pro proteinases resulting in the production of at least ten individual proteins. P3N-PIPO polyprotein is cleaved by P1 and HC-pro proteinases resulting in the production of three individual proteins. The P1 proteinase and the HC-pro cleave only their respective C-termini autocatalytically. 6K1 is essential for proper proteolytic separation of P3 from CI.

It is found in the host cytoplasm. Its subcellular location is the host nucleus. It localises to the host cytoplasmic vesicle. The protein localises to the host membrane. The protein resides in the virion. It carries out the reaction RNA(n) + a ribonucleoside 5'-triphosphate = RNA(n+1) + diphosphate. It catalyses the reaction Hydrolyzes glutaminyl bonds, and activity is further restricted by preferences for the amino acids in P6 - P1' that vary with the species of potyvirus, e.g. Glu-Xaa-Xaa-Tyr-Xaa-Gln-|-(Ser or Gly) for the enzyme from tobacco etch virus. The natural substrate is the viral polyprotein, but other proteins and oligopeptides containing the appropriate consensus sequence are also cleaved.. The catalysed reaction is Hydrolyzes a Gly-|-Gly bond at its own C-terminus, commonly in the sequence -Tyr-Xaa-Val-Gly-|-Gly, in the processing of the potyviral polyprotein.. Cysteine protease that cleaves a Gly-Gly dipeptide at its own C-terminus. Required for aphid transmission and also has proteolytic activity. Interacts with virions and aphid stylets. Acts as a suppressor of RNA-mediated gene silencing, also known as post-transcriptional gene silencing (PTGS), a mechanism of plant viral defense that limits the accumulation of viral RNAs. May have RNA-binding activity. Its function is as follows. Has helicase activity. It may be involved in replication. In terms of biological role, indispensable for virus replication. Reduces the abundance of host transcripts related to jasmonic acid biosynthesis therefore altering the host defenses. In order to increase its own stability, decreases host protein degradation pathways. Functionally, responsible for the formation of peripheral motile host endoplasmic reticulum (ER)-derived viral vesicles called 'viral factories', seat of the viral RNA (vRNA) replication and carrying vRNA to plasmodesmata for delivery into adjacent non-infected cells; this process relies on host Sec24a-binding. Mediates the cap-independent, EIF4E-dependent translation of viral genomic RNAs. Binds to the cap-binding site of host EIF4E and thus interferes with the host EIF4E-dependent mRNA export and translation. VPg-RNA directly binds EIF4E and is a template for transcription. Also forms trimeric complexes with EIF4E-EIF4G, which are templates for translation. Its function is as follows. Has RNA-binding and proteolytic activities. In terms of biological role, RNA-dependent RNA polymerase that ensures transcription and replication of viral RNA (vRNA). Functionally, involved in aphid transmission, cell-to-cell and systemis movement, encapsidation of the viral RNA and in the regulation of viral RNA amplification. The polypeptide is Genome polyprotein (Turnip mosaic virus (strain Japanese) (TuMV)).